The primary structure comprises 175 residues: MAEQDQNTQQAGGDAPSFNLQRVYLKDLSLEMPNAPHVFLEQEQPQVEVSINVGGQRLAETVFESTVTATVTTRINDKVLYLVEGTQAGIFELANIPAEQMDALLGIVCPTMLYPYLRANVADAITRTSLPALHLAEVNFQALYEQRLAELAQQQGGNNNGSDSGIILPPGTTRQ.

The segment at 154 to 175 (QQGGNNNGSDSGIILPPGTTRQ) is disordered.

It belongs to the SecB family. In terms of assembly, homotetramer, a dimer of dimers. One homotetramer interacts with 1 SecA dimer.

The protein resides in the cytoplasm. Its function is as follows. One of the proteins required for the normal export of preproteins out of the cell cytoplasm. It is a molecular chaperone that binds to a subset of precursor proteins, maintaining them in a translocation-competent state. It also specifically binds to its receptor SecA. This Bordetella petrii (strain ATCC BAA-461 / DSM 12804 / CCUG 43448) protein is Protein-export protein SecB.